The primary structure comprises 266 residues: RNA polymerase II subunit A C-terminal domain phosphatase ssu-72 (266 aa).

The disordered stretch occupies residues 1 to 31 (MSAVDTPTGAASSSKPDQNEQNGQNGGREDS). The segment covering 9–23 (GAASSSKPDQNEQNG) has biased composition (polar residues).

It belongs to the SSU72 phosphatase family. Component of the cleavage and polyadenylation factor (CPF) complex.

Its subcellular location is the nucleus. It carries out the reaction O-phospho-L-seryl-[protein] + H2O = L-seryl-[protein] + phosphate. It catalyses the reaction O-phospho-L-threonyl-[protein] + H2O = L-threonyl-[protein] + phosphate. Functionally, processively dephosphorylates Ser-5 of the heptad repeats YSPTSPS in the C-terminal domain of the largest RNA polymerase II subunit (rpb-1). In terms of biological role, component of the cleavage and polyadenylation factor (CPF) complex, which plays a key role in polyadenylation-dependent pre-mRNA 3'-end formation and cooperates with cleavage factors including the CFIA complex and NAB4/CFIB. Ssu-72 is required for 3'-end formation of snoRNAs. In Neurospora crassa (strain ATCC 24698 / 74-OR23-1A / CBS 708.71 / DSM 1257 / FGSC 987), this protein is RNA polymerase II subunit A C-terminal domain phosphatase ssu-72 (ssu-72).